The chain runs to 356 residues: MVEFLNSKNPQDIIDKLSLINNNGNKNIGNGNKTNNKKYITYSKNVFIPICNWCKNICGYCTFRRENYKLMNKQEIKEILLTGNKHGCREALFTFGETVDENPKIKEDLKKMGYNNILEYLYDISDWCLTNTDLLPHTNCGILSYEELKTLKEVNASMGLMLENSSDRLYNTIAHKDSPGKEPKKRLKMIEDAGKLKIPFTTGILVGIGETNEEIVQSLVDINNIHKKYGHIQEVIIQNFRAKESIPMSNYEEPTPLKMLKVLIVAKLILKDISIQVPPNLNSETGQLFLFAGVDDWGGVSPITKDFVNPEAPWPKIEELKKYTEEFGYSLKERLPVYEKYINENWLSCKVLEKIK.

The region spanning I40–N280 is the Radical SAM core domain. [4Fe-4S] cluster contacts are provided by C54, C58, and C61.

This sequence belongs to the radical SAM superfamily. CofG family. As to quaternary structure, consists of two subunits, CofG and CofH. [4Fe-4S] cluster is required as a cofactor.

The catalysed reaction is 5-amino-5-(4-hydroxybenzyl)-6-(D-ribitylimino)-5,6-dihydrouracil + S-adenosyl-L-methionine = 7,8-didemethyl-8-hydroxy-5-deazariboflavin + 5'-deoxyadenosine + L-methionine + NH4(+) + H(+). The protein operates within cofactor biosynthesis; coenzyme F0 biosynthesis. Catalyzes the radical-mediated synthesis of 7,8-didemethyl-8-hydroxy-5-deazariboflavin from 5-amino-5-(4-hydroxybenzyl)-6-(D-ribitylimino)-5,6-dihydrouracil. The polypeptide is 7,8-didemethyl-8-hydroxy-5-deazariboflavin synthase (Methanococcus aeolicus (strain ATCC BAA-1280 / DSM 17508 / OCM 812 / Nankai-3)).